The following is a 262-amino-acid chain: 3-methyl-2-oxobutanoate hydroxymethyltransferase (262 aa).

Positions 44 and 83 each coordinate Mg(2+). 3-methyl-2-oxobutanoate is bound by residues 44–45 (DS), Asp83, and Lys111. Glu113 serves as a coordination point for Mg(2+). The active-site Proton acceptor is Glu180.

It belongs to the PanB family. As to quaternary structure, homodecamer; pentamer of dimers. Requires Mg(2+) as cofactor.

Its subcellular location is the cytoplasm. The catalysed reaction is 3-methyl-2-oxobutanoate + (6R)-5,10-methylene-5,6,7,8-tetrahydrofolate + H2O = 2-dehydropantoate + (6S)-5,6,7,8-tetrahydrofolate. Its pathway is cofactor biosynthesis; (R)-pantothenate biosynthesis; (R)-pantoate from 3-methyl-2-oxobutanoate: step 1/2. Functionally, catalyzes the reversible reaction in which hydroxymethyl group from 5,10-methylenetetrahydrofolate is transferred onto alpha-ketoisovalerate to form ketopantoate. The polypeptide is 3-methyl-2-oxobutanoate hydroxymethyltransferase (Alcanivorax borkumensis (strain ATCC 700651 / DSM 11573 / NCIMB 13689 / SK2)).